The primary structure comprises 705 residues: GATOR2 complex protein WDR24 (705 aa).

WD repeat units follow at residues 1–28 (MDEN…RNKQ), 34–74 (EHKR…SVST), 77–117 (GQSE…RYER), 121–161 (AHNG…AKEI), 165–207 (QTIA…IPSA), and 211–254 (EHKD…IDRA). The segment at 633–655 (NCSNCKRPMSNRGWICDRCRQCA) adopts a C4-type zinc-finger fold. Residues C634, C637, C648, C651, C658, C661, C672, C675, H677, H680, H683, C694, C698, H700, and C702 each coordinate Zn(2+). An RING-type; atypical zinc finger spans residues 656-705 (SMCAVCHHVVKGLFVWCQGCSHGGHLQHIMKWLETSSHCPAGCGHLCEYT).

Belongs to the WD repeat WDR24 family. In terms of assembly, component of the GATOR2 subcomplex, composed of MIOS, SEC13, SEH1L, WDR24 and WDR59. The GATOR2 complex interacts with CASTOR1 and CASTOR2; the interaction is negatively regulated by arginine. The GATOR2 complex interacts with SESN1, SESN2 and SESN3; the interaction is negatively regulated by amino acids.

Its subcellular location is the lysosome membrane. It catalyses the reaction S-ubiquitinyl-[E2 ubiquitin-conjugating enzyme]-L-cysteine + [acceptor protein]-L-lysine = [E2 ubiquitin-conjugating enzyme]-L-cysteine + N(6)-ubiquitinyl-[acceptor protein]-L-lysine.. It participates in protein modification; protein ubiquitination. With respect to regulation, the GATOR2 complex is negatively regulated by the upstream amino acid sensors CASTOR1 and SESN2, which sequester the GATOR2 complex in absence of amino acids. In the presence of abundant amino acids, GATOR2 is released from CASTOR1 and SESN2 and activated. Catalytic component of the GATOR2 complex, a multiprotein complex that acts as an activator of the amino acid-sensing branch of the mTORC1 signaling pathway. The GATOR2 complex indirectly activates mTORC1 through the inhibition of the GATOR1 subcomplex. GATOR2 probably acts as an E3 ubiquitin-protein ligase toward GATOR1. In the presence of abundant amino acids, the GATOR2 complex mediates ubiquitination of the NPRL2 core component of the GATOR1 complex, leading to GATOR1 inactivation. In the absence of amino acids, GATOR2 is inhibited, activating the GATOR1 complex. In addition to its role in regulation of the mTORC1 complex, promotes the acidification of lysosomes and facilitates autophagic flux. Within the GATOR2 complex, WDR24 constitutes the catalytic subunit that mediates 'Lys-6'-linked ubiquitination of NPRL2. The polypeptide is GATOR2 complex protein WDR24 (Gallus gallus (Chicken)).